The following is a 279-amino-acid chain: Pantothenate synthetase (279 aa).

Position 26-33 (26-33 (MGNLHEGH)) interacts with ATP. Catalysis depends on His-33, which acts as the Proton donor. Gln-57 provides a ligand contact to (R)-pantoate. Gln-57 contributes to the beta-alanine binding site. 144 to 147 (GKKD) provides a ligand contact to ATP. Residue Gln-150 coordinates (R)-pantoate. ATP contacts are provided by residues Val-173 and 181 to 184 (LSSR).

The protein belongs to the pantothenate synthetase family. Homodimer.

The protein resides in the cytoplasm. It catalyses the reaction (R)-pantoate + beta-alanine + ATP = (R)-pantothenate + AMP + diphosphate + H(+). The protein operates within cofactor biosynthesis; (R)-pantothenate biosynthesis; (R)-pantothenate from (R)-pantoate and beta-alanine: step 1/1. Catalyzes the condensation of pantoate with beta-alanine in an ATP-dependent reaction via a pantoyl-adenylate intermediate. The protein is Pantothenate synthetase of Burkholderia vietnamiensis (strain G4 / LMG 22486) (Burkholderia cepacia (strain R1808)).